Here is a 325-residue protein sequence, read N- to C-terminus: Siroheme decarboxylase NirDL subunit (325 aa).

Belongs to the Ahb/Nir family. In terms of assembly, forms a complex composed of NirDL, NirG and NirH. All proteins are required for the total conversion of siroheme to didecarboxysiroheme.

It carries out the reaction siroheme + 2 H(+) = 12,18-didecarboxysiroheme + 2 CO2. It participates in porphyrin-containing compound metabolism. Its function is as follows. Involved in heme d1 biosynthesis. Catalyzes the decarboxylation of siroheme into didecarboxysiroheme. In Paracoccus denitrificans (strain Pd 1222), this protein is Siroheme decarboxylase NirDL subunit.